We begin with the raw amino-acid sequence, 372 residues long: Citrate/2-methylcitrate synthase (372 aa).

H188 serves as a coordination point for substrate. H223 is a catalytic residue. Position 256–260 (256–260 (KIMGF)) interacts with CoA. H262 is a catalytic residue. A substrate-binding site is contributed by R272. Residue D314 is part of the active site. Substrate-binding residues include R339 and R358.

Belongs to the citrate synthase family.

It catalyses the reaction propanoyl-CoA + oxaloacetate + H2O = 2-methylcitrate + CoA + H(+). The catalysed reaction is oxaloacetate + acetyl-CoA + H2O = citrate + CoA + H(+). The protein operates within carbohydrate metabolism; tricarboxylic acid cycle; isocitrate from oxaloacetate: step 1/2. Functionally, involved in both the tricarboxylic acid (TCA) and methylcitric acid cycles. Has both 2-methylcitrate synthase and citrate synthase activities. Catalyzes the condensation of propionyl-CoA and oxaloacetate to yield 2-methylcitrate (2-MC) and CoA, and the condensation of acetyl-CoA and oxaloacetate to yield citrate and CoA. Has 2.3-fold higher activity as a 2-methylcitrate synthase. Catalyzes the formation of either (2S,3R)- or (2R,3S)-2-methylcitrate. The polypeptide is Citrate/2-methylcitrate synthase (Bacillus subtilis (strain 168)).